The primary structure comprises 178 residues: Beta-lytic metalloendopeptidase (178 aa).

C65 and C111 are joined by a disulfide. Zn(2+) is bound by residues H120 and H122. C155 and C168 are oxidised to a cystine.

This sequence belongs to the peptidase M23A family. The cofactor is Zn(2+).

The catalysed reaction is Cleavage of N-acetylmuramoyl-|-Ala, and of the insulin B chain at 23-Gly-|-Phe-24 &gt; 18-Val-|-Cys(SO3H).. This chain is Beta-lytic metalloendopeptidase, found in Lysobacter enzymogenes.